The following is an 80-amino-acid chain: DNA-directed RNA polymerase RPB10 homolog (80 aa).

The Zn(2+) site is built by Cys7, Cys10, Cys65, and Cys66.

Belongs to the archaeal RpoN/eukaryotic RPB10 RNA polymerase subunit family. Part of the viral DNA-directed RNA polymerase that consists of 8 polII-like subunits (RPB1, RPB2, RPB3, RPB5, RPB6, RPB7, RPB9, RPB10), a capping enzyme and a termination factor.

It localises to the host cytoplasm. In terms of biological role, component of the DNA-directed RNA polymerase (RNAP) that catalyzes the transcription in the cytoplasm of viral DNA into RNA using the four ribonucleoside triphosphates as substrates. This is DNA-directed RNA polymerase RPB10 homolog from African swine fever virus (isolate Pig/Kenya/KEN-50/1950) (ASFV).